Here is a 145-residue protein sequence, read N- to C-terminus: Secreted LysM effector Vd2LysM (145 aa).

The first 18 residues, 1–18 (MRPDVFVLFTAFLGPAAA), serve as a signal peptide directing secretion. 2 consecutive LysM domains span residues 31 to 75 (GWYI…KIKV) and 96 to 140 (GWYH…DIVV).

Belongs to the secreted LysM effector family. Forms homodimers in a chitin-independent manner through interactions at the N-termini of EPL2 monomers. Homodimers are further polymerized in a chitin-dependent manner.

Functionally, secreted effector that enables the plant pathogenic fungus to manipulate host defenses for successful infection. Binds chitin, suppresses chitin-induced immune responses and protects hyphae against degradation by plant hydrolytic enzymes. Chitin-induced polymerization of homodimers forms a contiguous ELP2 highly oligomeric super-complexe that may precipitate at infection sites to eliminate chitin oligomers, and thus suppress the activation of chitin-induced plant immunity. This chain is Secreted LysM effector Vd2LysM, found in Verticillium dahliae (strain VdLs.17 / ATCC MYA-4575 / FGSC 10137) (Verticillium wilt).